A 147-amino-acid chain; its full sequence is Large ribosomal subunit protein uL13 (147 aa).

This sequence belongs to the universal ribosomal protein uL13 family. Part of the 50S ribosomal subunit.

In terms of biological role, this protein is one of the early assembly proteins of the 50S ribosomal subunit, although it is not seen to bind rRNA by itself. It is important during the early stages of 50S assembly. The polypeptide is Large ribosomal subunit protein uL13 (Streptomyces avermitilis (strain ATCC 31267 / DSM 46492 / JCM 5070 / NBRC 14893 / NCIMB 12804 / NRRL 8165 / MA-4680)).